A 1403-amino-acid polypeptide reads, in one-letter code: DNA-directed RNA polymerase subunit beta' (1403 aa).

Residues Cys-69, Cys-71, Cys-84, and Cys-87 each contribute to the Zn(2+) site. Mg(2+)-binding residues include Asp-461, Asp-463, and Asp-465. Zn(2+) is bound by residues Cys-818, Cys-891, Cys-898, and Cys-901. The interval 1384 to 1403 (LELLRNEGEDETGNEELVAE) is disordered. The segment covering 1391–1403 (GEDETGNEELVAE) has biased composition (acidic residues).

This sequence belongs to the RNA polymerase beta' chain family. In terms of assembly, the RNAP catalytic core consists of 2 alpha, 1 beta, 1 beta' and 1 omega subunit. When a sigma factor is associated with the core the holoenzyme is formed, which can initiate transcription. Mg(2+) is required as a cofactor. The cofactor is Zn(2+).

The catalysed reaction is RNA(n) + a ribonucleoside 5'-triphosphate = RNA(n+1) + diphosphate. In terms of biological role, DNA-dependent RNA polymerase catalyzes the transcription of DNA into RNA using the four ribonucleoside triphosphates as substrates. The protein is DNA-directed RNA polymerase subunit beta' of Koribacter versatilis (strain Ellin345).